Reading from the N-terminus, the 146-residue chain is Core protein D2 (146 aa).

Belongs to the orthopoxvirus OPG114 family. As to quaternary structure, part of a complex composed of the kinase OPG054, OPG092, OPG100, OPG114, OPG115, OPG142 and OPG157.

Its subcellular location is the virion. Its function is as follows. Late protein which is part of a large complex required for early virion morphogenesis. This complex participates in the formation of virosomes and the incorporation of virosomal contents into nascent immature virions. The sequence is that of Core protein D2 (OPG114) from Vaccinia virus (strain Copenhagen) (VACV).